Here is a 479-residue protein sequence, read N- to C-terminus: Octopamine receptor (479 aa).

The Extracellular segment spans residues 1–57; that stretch reads MGQAATHDANNYTSINYTEIYDVIEDEKDVCAVADEPNIPCSFGISLAVPEWEAICT. Residues asparagine 11 and asparagine 16 are each glycosylated (N-linked (GlcNAc...) asparagine). Residues 58 to 80 form a helical membrane-spanning segment; that stretch reads AIILTMIIISTVVGNILVILSVF. Over 81–90 the chain is Cytoplasmic; it reads TYKPLRIVQN. A helical membrane pass occupies residues 91–112; sequence FFIVSLAVADLTVAILVLPLNV. The Extracellular segment spans residues 113-129; the sequence is AYSILGQWVFGIYVCKM. Residues 130-150 traverse the membrane as a helical segment; it reads WLTCDIMCCTSSILNLCAIAL. Over 151–170 the chain is Cytoplasmic; that stretch reads DRYWAITDPINYAQKRTLER. A helical membrane pass occupies residues 171-193; it reads VLFMIGIVWILSLVISSPPLLGW. Over 194–218 the chain is Extracellular; that stretch reads NDWPEVFEPDTPCRLTSQPGFVIFS. A helical transmembrane segment spans residues 219–240; sequence SSGSFYIPLVIMTVVYFEIYLA. The Cytoplasmic portion of the chain corresponds to 241-407; the sequence is TKKRLRDRAK…LTRERRAART (167 aa). The tract at residues 260–319 is disordered; sequence GRNKYETKESDPNDQDSVSSDANPNEHQGGTRLVAENEKKHRTRKLTPKKKPKRRYWSKD. Positions 274 to 287 are enriched in polar residues; sequence QDSVSSDANPNEHQ. Over residues 299 to 315 the composition is skewed to basic residues; it reads KHRTRKLTPKKKPKRRY. The chain crosses the membrane as a helical span at residues 408 to 429; sequence LGIIMGVFVVCWLPFFVIYLVI. Residues 430-441 lie on the Extracellular side of the membrane; sequence PFCVSCCLSNKF. The helical transmembrane segment at 442–462 threads the bilayer; the sequence is INFITWLGYVNSALNPLIYTI. Over 463-479 the chain is Cytoplasmic; sequence FNMDFRRAFKKLLFIKC.

The protein belongs to the G-protein coupled receptor 1 family.

Its subcellular location is the cell membrane. Receptor for octopamine. Octopamine (OA) is a neurotransmitter, neurohormone, and neuromodulator in invertebrates. The activity of this receptor is mediated by G proteins which activate adenylyl cyclase. The sequence is that of Octopamine receptor from Bombyx mori (Silk moth).